Reading from the N-terminus, the 254-residue chain is Glutathione S-transferase F14 (254 aa).

Residues 4-85 (SKMKLHCGFI…YLAEQYKDVG (82 aa)) form the GST N-terminal domain. Glutathione contacts are provided by residues 42 to 43 (AK), 56 to 57 (EV), and 69 to 70 (EP). One can recognise a GST C-terminal domain in the interval 92-231 (DPKKRAIMSM…DLMKQRRLPI (140 aa)).

This sequence belongs to the GST superfamily. Phi family.

It localises to the cytoplasm. The protein localises to the cytosol. The enzyme catalyses RX + glutathione = an S-substituted glutathione + a halide anion + H(+). May be involved in the conjugation of reduced glutathione to a wide number of exogenous and endogenous hydrophobic electrophiles and have a detoxification role against certain herbicides. In Arabidopsis thaliana (Mouse-ear cress), this protein is Glutathione S-transferase F14.